Here is a 337-residue protein sequence, read N- to C-terminus: Protein SphX (337 aa).

An N-terminal signal peptide occupies residues 1 to 30 (MTTLKPALRRAAVLLPIAAVASSLFPIQEA).

It belongs to the PstS family. Post-translationally, the N-terminus is blocked.

It is found in the cell inner membrane. Its function is as follows. May be involved in the system for phosphate transport across the cytoplasmic membrane. This is Protein SphX (sphX) from Synechococcus elongatus (strain ATCC 33912 / PCC 7942 / FACHB-805) (Anacystis nidulans R2).